Here is a 274-residue protein sequence, read N- to C-terminus: Large ribosomal subunit protein uL2cz/uL2cy (274 aa).

Disordered regions lie at residues 1 to 21 and 225 to 274; these read MAIH…VDSQ and PVDH…RRSK.

This sequence belongs to the universal ribosomal protein uL2 family. In terms of assembly, part of the 50S ribosomal subunit.

It is found in the plastid. It localises to the chloroplast. This Arabidopsis thaliana (Mouse-ear cress) protein is Large ribosomal subunit protein uL2cz/uL2cy (rpl2-A).